Reading from the N-terminus, the 404-residue chain is Glucoside xylosyltransferase 1 (404 aa).

The Cytoplasmic portion of the chain corresponds to 1–6; the sequence is MRRYLR. The helical; Signal-anchor for type II membrane protein transmembrane segment at 7–29 threads the bilayer; sequence VVGLCLACGFCSLLYAFSQLAVS. Topologically, residues 30–404 are lumenal; it reads LEEGAAGGRR…NRYDTPPKER (375 aa). A glycan (N-linked (GlcNAc...) asparagine) is linked at Asn-201.

Belongs to the glycosyltransferase 8 family.

The protein localises to the membrane. It catalyses the reaction 3-O-(beta-D-glucosyl)-L-seryl-[EGF-like domain protein] + UDP-alpha-D-xylose = 3-O-[alpha-D-xylosyl-(1-&gt;3)-beta-D-glucosyl]-L-seryl-[EGF-like domain protein] + UDP + H(+). Functionally, glycosyltransferase which elongates the O-linked glucose attached to EGF-like repeats in the extracellular domain of Notch proteins by catalyzing the addition of xylose. The sequence is that of Glucoside xylosyltransferase 1 (Gxylt1) from Mus musculus (Mouse).